The chain runs to 338 residues: 1-aminocyclopropane-1-carboxylate deaminase (338 aa).

Lysine 51 carries the post-translational modification N6-(pyridoxal phosphate)lysine. Catalysis depends on serine 78, which acts as the Nucleophile.

It belongs to the ACC deaminase/D-cysteine desulfhydrase family. In terms of assembly, homotrimer. It depends on pyridoxal 5'-phosphate as a cofactor.

It catalyses the reaction 1-aminocyclopropane-1-carboxylate + H2O = 2-oxobutanoate + NH4(+). Functionally, catalyzes a cyclopropane ring-opening reaction, the irreversible conversion of 1-aminocyclopropane-1-carboxylate (ACC) to ammonia and alpha-ketobutyrate. Allows growth on ACC as a nitrogen source. This chain is 1-aminocyclopropane-1-carboxylate deaminase, found in Paraburkholderia phytofirmans (strain DSM 17436 / LMG 22146 / PsJN) (Burkholderia phytofirmans).